The primary structure comprises 465 residues: MPSTPSLKVVHELPACTLCVGPLEDAVTAPCGHTFCRLCLPTLSQMGAQSSGKILLCPLCQEEEQAETPMAPVPLGPLGETYCEEHGEKIYFFCENDAEFLCVFCREGPTHQAHTVGFLDEAIQPYRDRLRSRLEALSMERDEIEDVKCREDQKLQVLLTQIENKKHQVEAAFERLQQELEQQRCLLLARLRELEQQIWKERDEYITKVSEEVSRLGAQVKELEEKCQQPASELLQDIRVNQSRCEMKTFVSPEAISPDLVKKIRDFHRKILTLPEMMRMFSENLAHHLEIDSGVITLDPQTASRSLVLSEDRKSVRYTRQKKNLPDSPLRFDGLPAVLGFPGFSSGRHRWQVDLQLGDGGGCTVGVAGEGVRRKGEMGLSAEDGVWAVIISHQQCWASTSPGTDLPLSEIPRYVGVALDYEAGQVTLFNAQTQEPIFTFAASFSGKVFPFFAVWKKGSCLTLKG.

The segment at 16–61 adopts an RING-type zinc-finger fold; the sequence is CTLCVGPLEDAVTAPCGHTFCRLCLPTLSQMGAQSSGKILLCPLCQ. Residues 78-119 form a B box-type zinc finger; sequence LGETYCEEHGEKIYFFCENDAEFLCVFCREGPTHQAHTVGFL. The Zn(2+) site is built by C83, H86, C105, and H111. Residues 126–229 adopt a coiled-coil conformation; the sequence is YRDRLRSRLE…VKELEEKCQQ (104 aa). One can recognise a B30.2/SPRY domain in the interval 276-465; sequence EMMRMFSENL…KKGSCLTLKG (190 aa).

Belongs to the TRIM/RBCC family. Interacts with paxillin/PXN; this interaction recruits TRIM15 to focal adhesions. Interacts with TRIM8; this interaction prevents TRIM8 cytoplasmic translocation.

The protein resides in the cytoplasm. It localises to the nucleus. The protein localises to the cell junction. It is found in the focal adhesion. The catalysed reaction is S-ubiquitinyl-[E2 ubiquitin-conjugating enzyme]-L-cysteine + [acceptor protein]-L-lysine = [E2 ubiquitin-conjugating enzyme]-L-cysteine + N(6)-ubiquitinyl-[acceptor protein]-L-lysine.. In terms of biological role, E3 ubiquitin ligase that plays a role in several processes including innate antiviral immnity, cell migration and chemotaxis. Acts as a 'Lys-63'-specific ubiquitin ligase for MAPK1/ERK2 and MAPK3/ERK1, promoting their activation by facilitating their interaction with MAP2K1 and MAP2K2. Also plays a role in cell migration and chemotaxis by acting as a stable focal adhesion component upon recruitment by multi-adapter protein paxillin/PXN. Functions in the RIGI-mediated interferon induction pathway upstream or at the level of MAVS. Inhibits NF-kappa-B activation by turnover of 'Lys-63'-linked ubiquitination of MAP3K7/TAK1. Mechanistically, prevents TRIM8 cytoplasmic translocation and thus inhibits TRIM8-mediated 'Lys-63'-linked polyubiquitination of MAP3K7/TAK1 in the cytoplasm. Also has an important regulatory effect on the activation of hepatic stellate cells (HSCs). This chain is E3 ubiquitin-protein ligase TRIM15 (TRIM15), found in Macaca mulatta (Rhesus macaque).